A 368-amino-acid chain; its full sequence is Acetyl-coenzyme A carboxylase carboxyl transferase subunit alpha (368 aa).

Positions Glu44–Glu294 constitute a CoA carboxyltransferase C-terminal domain.

The protein belongs to the AccA family. As to quaternary structure, acetyl-CoA carboxylase is a heterohexamer composed of biotin carboxyl carrier protein (AccB), biotin carboxylase (AccC) and two subunits each of ACCase subunit alpha (AccA) and ACCase subunit beta (AccD).

The protein localises to the cytoplasm. It carries out the reaction N(6)-carboxybiotinyl-L-lysyl-[protein] + acetyl-CoA = N(6)-biotinyl-L-lysyl-[protein] + malonyl-CoA. The protein operates within lipid metabolism; malonyl-CoA biosynthesis; malonyl-CoA from acetyl-CoA: step 1/1. Component of the acetyl coenzyme A carboxylase (ACC) complex. First, biotin carboxylase catalyzes the carboxylation of biotin on its carrier protein (BCCP) and then the CO(2) group is transferred by the carboxyltransferase to acetyl-CoA to form malonyl-CoA. This chain is Acetyl-coenzyme A carboxylase carboxyl transferase subunit alpha, found in Pelagibacter ubique (strain HTCC1062).